The chain runs to 215 residues: Proapoptotic nucleolar protein 1 (215 aa).

The interval 35–215 is disordered; it reads RKGTPTARCL…RLPAPRSAST (181 aa). Over residues 169-180 the composition is skewed to pro residues; it reads PRPPQHLSPPQP. The tract at residues 185–215 is necessary for nucleolar localization; it reads MGAAEGSRRADTHHARRRRRARLPAPRSAST.

Widely expressed.

It localises to the nucleus. Its subcellular location is the nucleolus. Functionally, apoptosis-inducing protein that modulates the tumor suppressor function of CDKN2A/p14ARF. Enhances the stability of CDKN2A/p14ARF protein by protecting it from degradation. May act as a tumor suppressor. The protein is Proapoptotic nucleolar protein 1 of Homo sapiens (Human).